The following is a 207-amino-acid chain: Peptidyl-tRNA hydrolase (207 aa).

TRNA is bound at residue Y14. H19 (proton acceptor) is an active-site residue. Y64, N66, and N112 together coordinate tRNA.

The protein belongs to the PTH family. Monomer.

It localises to the cytoplasm. It carries out the reaction an N-acyl-L-alpha-aminoacyl-tRNA + H2O = an N-acyl-L-amino acid + a tRNA + H(+). Hydrolyzes ribosome-free peptidyl-tRNAs (with 1 or more amino acids incorporated), which drop off the ribosome during protein synthesis, or as a result of ribosome stalling. In terms of biological role, catalyzes the release of premature peptidyl moieties from peptidyl-tRNA molecules trapped in stalled 50S ribosomal subunits, and thus maintains levels of free tRNAs and 50S ribosomes. In Rhodopseudomonas palustris (strain HaA2), this protein is Peptidyl-tRNA hydrolase.